The following is a 437-amino-acid chain: GTPase Obg (437 aa).

The 159-residue stretch at 2–160 (SMFLDTAKIS…RQLELELKIL (159 aa)) folds into the Obg domain. The OBG-type G domain occupies 161–338 (ADVGLVGFPS…LLEATAELLA (178 aa)). GTP-binding positions include 167–174 (GFPSVGKS), 192–196 (FTTIV), 214–217 (DLPG), 284–287 (NKMD), and 319–321 (SSL). The Mg(2+) site is built by Ser174 and Thr194. One can recognise an OCT domain in the interval 359-437 (GFAETEKNFE…IGKFEFEFVD (79 aa)).

It belongs to the TRAFAC class OBG-HflX-like GTPase superfamily. OBG GTPase family. As to quaternary structure, monomer. Mg(2+) serves as cofactor.

The protein resides in the cytoplasm. Its function is as follows. An essential GTPase which binds GTP, GDP and possibly (p)ppGpp with moderate affinity, with high nucleotide exchange rates and a fairly low GTP hydrolysis rate. Plays a role in control of the cell cycle, stress response, ribosome biogenesis and in those bacteria that undergo differentiation, in morphogenesis control. The chain is GTPase Obg from Streptococcus pyogenes serotype M49 (strain NZ131).